The sequence spans 516 residues: GTPase Obg (516 aa).

Positions 4–161 (PTFVDRVTLH…LEIVLELKVV (158 aa)) constitute an Obg domain. The OBG-type G domain occupies 162–332 (ADIGLVGFPS…LTFAMAGIVE (171 aa)). Residues 168–175 (GFPSAGKS), 193–197 (FTTLV), 214–217 (DVPG), 284–287 (NKVD), and 313–315 (SAA) contribute to the GTP site. Positions 175 and 195 each coordinate Mg(2+). The 82-residue stretch at 351-432 (PSVDGSDAFT…ENAVVFDFKP (82 aa)) folds into the OCT domain. Positions 466–491 (AMADRAEGETRADVARRLDRPAREDG) are enriched in basic and acidic residues. The tract at residues 466-516 (AMADRAEGETRADVARRLDRPAREDGGAYGPQSYEIGGRDDPDWAEEDLGE) is disordered.

The protein belongs to the TRAFAC class OBG-HflX-like GTPase superfamily. OBG GTPase family. As to quaternary structure, monomer. It depends on Mg(2+) as a cofactor.

It is found in the cytoplasm. Its function is as follows. An essential GTPase which binds GTP, GDP and possibly (p)ppGpp with moderate affinity, with high nucleotide exchange rates and a fairly low GTP hydrolysis rate. Plays a role in control of the cell cycle, stress response, ribosome biogenesis and in those bacteria that undergo differentiation, in morphogenesis control. In Nocardioides sp. (strain ATCC BAA-499 / JS614), this protein is GTPase Obg.